A 172-amino-acid chain; its full sequence is Small ribosomal subunit protein uS5 (172 aa).

One can recognise an S5 DRBM domain in the interval 16–79 (LKDRLVAINR…ESAKKNLVKV (64 aa)).

Belongs to the universal ribosomal protein uS5 family. In terms of assembly, part of the 30S ribosomal subunit. Contacts proteins S4 and S8.

With S4 and S12 plays an important role in translational accuracy. Its function is as follows. Located at the back of the 30S subunit body where it stabilizes the conformation of the head with respect to the body. The sequence is that of Small ribosomal subunit protein uS5 from Bacteroides thetaiotaomicron (strain ATCC 29148 / DSM 2079 / JCM 5827 / CCUG 10774 / NCTC 10582 / VPI-5482 / E50).